The primary structure comprises 191 residues: Guanylate kinase (191 aa).

In terms of domain architecture, Guanylate kinase-like spans 4–182; it reads GRLIVVSGPS…AREEMIEIMR (179 aa). ATP is bound at residue 11-18; the sequence is GPSGAGKS.

This sequence belongs to the guanylate kinase family.

The protein resides in the cytoplasm. It catalyses the reaction GMP + ATP = GDP + ADP. Essential for recycling GMP and indirectly, cGMP. The chain is Guanylate kinase from Rubrobacter xylanophilus (strain DSM 9941 / JCM 11954 / NBRC 16129 / PRD-1).